The primary structure comprises 989 residues: Mediator of RNA polymerase II transcription subunit 24 (989 aa).

6 short sequence motifs (LXXLL motif) span residues 343 to 347 (LTPLL), 359 to 363 (LSLLL), 447 to 451 (LDLLL), 556 to 560 (LVALL), 787 to 791 (LPRLL), and 857 to 861 (LMRLL).

It belongs to the Mediator complex subunit 24 family. As to quaternary structure, component of the Mediator complex.

The protein resides in the nucleus. Its function is as follows. Component of the Mediator complex, a coactivator involved in the regulated transcription of nearly all RNA polymerase II-dependent genes. Mediator functions as a bridge to convey information from gene-specific regulatory proteins to the basal RNA polymerase II transcription machinery. Mediator is recruited to promoters by direct interactions with regulatory proteins and serves as a scaffold for the assembly of a functional preinitiation complex with RNA polymerase II and the general transcription factors. Required for proliferation of enteric nervous system precursors. Required for the development of dopaminergic amacrine cells and rod photoreceptor cells in the retina. The protein is Mediator of RNA polymerase II transcription subunit 24 (med24) of Danio rerio (Zebrafish).